Here is a 269-residue protein sequence, read N- to C-terminus: Formamidopyrimidine-DNA glycosylase (269 aa).

The Schiff-base intermediate with DNA role is filled by Pro2. The active-site Proton donor is the Glu3. The active-site Proton donor; for beta-elimination activity is the Lys57. The DNA site is built by His90, Arg109, and Lys150. The segment at 235–269 (QVYGRKGEPCRVCGTPIVATKHAQRATFYCRQCQK) adopts an FPG-type zinc-finger fold. Arg259 (proton donor; for delta-elimination activity) is an active-site residue.

It belongs to the FPG family. Monomer. Requires Zn(2+) as cofactor.

It catalyses the reaction Hydrolysis of DNA containing ring-opened 7-methylguanine residues, releasing 2,6-diamino-4-hydroxy-5-(N-methyl)formamidopyrimidine.. The enzyme catalyses 2'-deoxyribonucleotide-(2'-deoxyribose 5'-phosphate)-2'-deoxyribonucleotide-DNA = a 3'-end 2'-deoxyribonucleotide-(2,3-dehydro-2,3-deoxyribose 5'-phosphate)-DNA + a 5'-end 5'-phospho-2'-deoxyribonucleoside-DNA + H(+). Involved in base excision repair of DNA damaged by oxidation or by mutagenic agents. Acts as a DNA glycosylase that recognizes and removes damaged bases. Has a preference for oxidized purines, such as 7,8-dihydro-8-oxoguanine (8-oxoG). Has AP (apurinic/apyrimidinic) lyase activity and introduces nicks in the DNA strand. Cleaves the DNA backbone by beta-delta elimination to generate a single-strand break at the site of the removed base with both 3'- and 5'-phosphates. This is Formamidopyrimidine-DNA glycosylase from Escherichia coli (strain 55989 / EAEC).